The following is an 85-amino-acid chain: Small ribosomal subunit protein uS17 (85 aa).

It belongs to the universal ribosomal protein uS17 family. As to quaternary structure, part of the 30S ribosomal subunit.

Its function is as follows. One of the primary rRNA binding proteins, it binds specifically to the 5'-end of 16S ribosomal RNA. The polypeptide is Small ribosomal subunit protein uS17 (Lachnoclostridium phytofermentans (strain ATCC 700394 / DSM 18823 / ISDg) (Clostridium phytofermentans)).